The chain runs to 93 residues: Pyrimidine/purine nucleoside phosphorylase (93 aa).

Belongs to the nucleoside phosphorylase PpnP family.

The catalysed reaction is a purine D-ribonucleoside + phosphate = a purine nucleobase + alpha-D-ribose 1-phosphate. The enzyme catalyses adenosine + phosphate = alpha-D-ribose 1-phosphate + adenine. It carries out the reaction cytidine + phosphate = cytosine + alpha-D-ribose 1-phosphate. It catalyses the reaction guanosine + phosphate = alpha-D-ribose 1-phosphate + guanine. The catalysed reaction is inosine + phosphate = alpha-D-ribose 1-phosphate + hypoxanthine. The enzyme catalyses thymidine + phosphate = 2-deoxy-alpha-D-ribose 1-phosphate + thymine. It carries out the reaction uridine + phosphate = alpha-D-ribose 1-phosphate + uracil. It catalyses the reaction xanthosine + phosphate = alpha-D-ribose 1-phosphate + xanthine. In terms of biological role, catalyzes the phosphorolysis of diverse nucleosides, yielding D-ribose 1-phosphate and the respective free bases. Can use uridine, adenosine, guanosine, cytidine, thymidine, inosine and xanthosine as substrates. Also catalyzes the reverse reactions. This chain is Pyrimidine/purine nucleoside phosphorylase, found in Pseudomonas aeruginosa (strain LESB58).